The sequence spans 603 residues: Methionine--tRNA ligase (603 aa).

The short motif at 14 to 24 (PYANGPRHIGH) is the 'HIGH' region element. The Zn(2+) site is built by Cys-146, Cys-149, Cys-159, and Cys-162. A 'KMSKS' region motif is present at residues 354-358 (KFSSS). Ser-357 lines the ATP pocket.

The protein belongs to the class-I aminoacyl-tRNA synthetase family. MetG type 1 subfamily. In terms of assembly, monomer. Requires Zn(2+) as cofactor.

It localises to the cytoplasm. It catalyses the reaction tRNA(Met) + L-methionine + ATP = L-methionyl-tRNA(Met) + AMP + diphosphate. Is required not only for elongation of protein synthesis but also for the initiation of all mRNA translation through initiator tRNA(fMet) aminoacylation. The chain is Methionine--tRNA ligase from Salinispora tropica (strain ATCC BAA-916 / DSM 44818 / JCM 13857 / NBRC 105044 / CNB-440).